The following is a 932-amino-acid chain: Protein translocase subunit SecA (932 aa).

ATP is bound by residues glutamine 87, 105–109, and aspartate 515; that span reads GEGKT. Cysteine 916, cysteine 918, cysteine 927, and histidine 928 together coordinate Zn(2+).

It belongs to the SecA family. As to quaternary structure, monomer and homodimer. Part of the essential Sec protein translocation apparatus which comprises SecA, SecYEG and auxiliary proteins SecDF-YajC and YidC. Requires Zn(2+) as cofactor.

It localises to the cell inner membrane. The protein resides in the cytoplasm. The catalysed reaction is ATP + H2O + cellular proteinSide 1 = ADP + phosphate + cellular proteinSide 2.. Part of the Sec protein translocase complex. Interacts with the SecYEG preprotein conducting channel. Has a central role in coupling the hydrolysis of ATP to the transfer of proteins into and across the cell membrane, serving both as a receptor for the preprotein-SecB complex and as an ATP-driven molecular motor driving the stepwise translocation of polypeptide chains across the membrane. The sequence is that of Protein translocase subunit SecA from Burkholderia orbicola (strain MC0-3).